The following is a 123-amino-acid chain: Late histone H2B.L1 (123 aa).

Positions 1–10 (MPAKAQPAGK) are enriched in low complexity. Residues 1-33 (MPAKAQPAGKKGSKKAKAPRPSGGKKRRRRRKE) are disordered. Basic residues predominate over residues 11–32 (KGSKKAKAPRPSGGKKRRRRRK). Ser110 is a glycosylation site (O-linked (GlcNAc) serine). A Glycyl lysine isopeptide (Lys-Gly) (interchain with G-Cter in ubiquitin) cross-link involves residue Lys118.

This sequence belongs to the histone H2B family. The nucleosome is a histone octamer containing two molecules each of H2A, H2B, H3 and H4 assembled in one H3-H4 heterotetramer and two H2A-H2B heterodimers. The octamer wraps approximately 147 bp of DNA. In terms of processing, monoubiquitination of Lys-118 gives a specific tag for epigenetic transcriptional activation and is also prerequisite for histone H3 'Lys-4' and 'Lys-79' methylation. Post-translationally, glcNAcylation at Ser-110 promotes monoubiquitination of Lys-118. It fluctuates in response to extracellular glucose, and associates with transcribed genes.

Its subcellular location is the nucleus. The protein resides in the chromosome. Core component of nucleosome. Nucleosomes wrap and compact DNA into chromatin, limiting DNA accessibility to the cellular machineries which require DNA as a template. Histones thereby play a central role in transcription regulation, DNA repair, DNA replication and chromosomal stability. DNA accessibility is regulated via a complex set of post-translational modifications of histones, also called histone code, and nucleosome remodeling. The sequence is that of Late histone H2B.L1 from Strongylocentrotus purpuratus (Purple sea urchin).